Consider the following 251-residue polypeptide: MNLISIPAFQDNYIWLLANRQKHCVIVDPGESAPVLATLAQGQYVPQAILLTHHHNDHVGGVADLRHHFPDIPVYGPQETAKKGATVIVNDGDSLTIAGQNYTIIAVPGHTLGHIAYYSSPYLFCGDTLFSAGCGRLLEGTPEQMYASIQRLAQLPDETLICCAHEYTLSNLKFAHAILPADQDIATYQQQIEQLRSKNLPSLPVKLQFERKINVFLRCNDIDLQRKIETTSPPDSLVSVFCELRSRKDSF.

The Zn(2+) site is built by His-53, His-55, Asp-57, His-58, His-110, Asp-127, and His-165.

Belongs to the metallo-beta-lactamase superfamily. Glyoxalase II family. As to quaternary structure, monomer. Requires Zn(2+) as cofactor.

The enzyme catalyses an S-(2-hydroxyacyl)glutathione + H2O = a 2-hydroxy carboxylate + glutathione + H(+). It functions in the pathway secondary metabolite metabolism; methylglyoxal degradation; (R)-lactate from methylglyoxal: step 2/2. Its function is as follows. Thiolesterase that catalyzes the hydrolysis of S-D-lactoyl-glutathione to form glutathione and D-lactic acid. The chain is Hydroxyacylglutathione hydrolase from Yersinia pestis (strain Pestoides F).